The following is a 721-amino-acid chain: uncharacterized protein (721 aa).

Disordered regions lie at residues 196–291 (TSMT…VGGP) and 370–513 (AGIP…AAEQ). Composition is skewed to low complexity over residues 202-224 (SPAGSPFGAAPSAPSHSTTTSGP) and 232-250 (SPFGTAPMVLSSSSTSSGP). Pro residues-rich tracts occupy residues 264 to 283 (PMPPGPPPPGTVSPPLPPSA) and 379 to 389 (APTPSPAPIAP). The span at 419–429 (APAGPLPAYGA) shows a compositional bias: low complexity. Over residues 435–446 (VTTPPATPPTPT) the composition is skewed to pro residues. Residues 470-484 (VNKSTAPATTQAQPS) show a composition bias toward polar residues. Residues 491 to 505 (ASATAAATTGAAAGD) show a composition bias toward low complexity.

This is an uncharacterized protein from Mycobacterium tuberculosis (strain ATCC 25618 / H37Rv).